The following is a 156-amino-acid chain: ADP-ribose 1''-phosphate phosphatase (156 aa).

The region spanning 1 to 156 (MIQYIKGDLF…DNLHFNVYVI (156 aa)) is the Macro domain. Residues 7–9 (GDL), 25–27 (ACN), 32–37 (WGGGIA), and 127–133 (INAGIFG) each bind substrate.

The protein belongs to the POA1 family.

It catalyses the reaction ADP-alpha-D-ribose 1''-phosphate + H2O = ADP-D-ribose + phosphate. In terms of biological role, highly specific phosphatase involved in the metabolism of ADP-ribose 1''-phosphate (Appr1p) which is produced as a consequence of tRNA splicing. This chain is ADP-ribose 1''-phosphate phosphatase (POA1), found in Candida albicans (strain SC5314 / ATCC MYA-2876) (Yeast).